The chain runs to 308 residues: Pseudouridine-5'-phosphate glycosidase (308 aa).

Catalysis depends on glutamate 25, which acts as the Proton donor. Lysine 86 and valine 106 together coordinate substrate. Mn(2+) is bound at residue aspartate 142. 144-146 (SAD) contributes to the substrate binding site. Lysine 163 (nucleophile) is an active-site residue.

Belongs to the pseudouridine-5'-phosphate glycosidase family. In terms of assembly, homotrimer. It depends on Mn(2+) as a cofactor.

It catalyses the reaction D-ribose 5-phosphate + uracil = psi-UMP + H2O. Its function is as follows. Catalyzes the reversible cleavage of pseudouridine 5'-phosphate (PsiMP) to ribose 5-phosphate and uracil. Functions biologically in the cleavage direction, as part of a pseudouridine degradation pathway. In Symbiobacterium thermophilum (strain DSM 24528 / JCM 14929 / IAM 14863 / T), this protein is Pseudouridine-5'-phosphate glycosidase.